A 208-amino-acid chain; its full sequence is Ribonuclease HII (208 aa).

One can recognise an RNase H type-2 domain in the interval 5–198 (PLIAGVDEVG…CQPRLEHDCR (194 aa)). A divalent metal cation contacts are provided by Asp11, Glu12, and Asp106.

Belongs to the RNase HII family. Mn(2+) is required as a cofactor. Requires Mg(2+) as cofactor.

Its subcellular location is the cytoplasm. It catalyses the reaction Endonucleolytic cleavage to 5'-phosphomonoester.. In terms of biological role, endonuclease that specifically degrades the RNA of RNA-DNA hybrids. In Microcystis aeruginosa (strain NIES-843 / IAM M-2473), this protein is Ribonuclease HII.